The chain runs to 309 residues: Ribonuclease Z (309 aa).

Zn(2+) is bound by residues His-63, His-65, Asp-67, His-68, His-145, Asp-216, and His-274. Asp-67 (proton acceptor) is an active-site residue.

It belongs to the RNase Z family. In terms of assembly, homodimer. Zn(2+) serves as cofactor.

It carries out the reaction Endonucleolytic cleavage of RNA, removing extra 3' nucleotides from tRNA precursor, generating 3' termini of tRNAs. A 3'-hydroxy group is left at the tRNA terminus and a 5'-phosphoryl group is left at the trailer molecule.. Its function is as follows. Zinc phosphodiesterase, which displays some tRNA 3'-processing endonuclease activity. Probably involved in tRNA maturation, by removing a 3'-trailer from precursor tRNA. In Streptococcus pyogenes serotype M1, this protein is Ribonuclease Z.